The primary structure comprises 115 residues: Large ribosomal subunit protein bL19 (115 aa).

This sequence belongs to the bacterial ribosomal protein bL19 family.

In terms of biological role, this protein is located at the 30S-50S ribosomal subunit interface and may play a role in the structure and function of the aminoacyl-tRNA binding site. In Edwardsiella ictaluri (strain 93-146), this protein is Large ribosomal subunit protein bL19.